The following is a 429-amino-acid chain: Adenylosuccinate synthetase (429 aa).

GTP-binding positions include 12–18 and 40–42; these read GDEGKGK and GHT. Aspartate 13 serves as the catalytic Proton acceptor. Positions 13 and 40 each coordinate Mg(2+). IMP is bound by residues 13–16, 38–41, threonine 128, arginine 142, glutamine 223, threonine 238, and arginine 302; these read DEGK and NAGH. The active-site Proton donor is the histidine 41. Residue 298 to 304 coordinates substrate; that stretch reads VNTGRPR. GTP is bound by residues arginine 304, 330–332, and 412–414; these read KLD and GVG.

It belongs to the adenylosuccinate synthetase family. In terms of assembly, homodimer. Mg(2+) is required as a cofactor.

Its subcellular location is the cytoplasm. The catalysed reaction is IMP + L-aspartate + GTP = N(6)-(1,2-dicarboxyethyl)-AMP + GDP + phosphate + 2 H(+). Its pathway is purine metabolism; AMP biosynthesis via de novo pathway; AMP from IMP: step 1/2. Functionally, plays an important role in the de novo pathway of purine nucleotide biosynthesis. Catalyzes the first committed step in the biosynthesis of AMP from IMP. In Micrococcus luteus (strain ATCC 4698 / DSM 20030 / JCM 1464 / CCM 169 / CCUG 5858 / IAM 1056 / NBRC 3333 / NCIMB 9278 / NCTC 2665 / VKM Ac-2230) (Micrococcus lysodeikticus), this protein is Adenylosuccinate synthetase.